The following is a 643-amino-acid chain: 1-deoxy-D-xylulose-5-phosphate synthase (643 aa).

Thiamine diphosphate-binding positions include histidine 78 and alanine 119 to serine 121. Residue aspartate 150 participates in Mg(2+) binding. Thiamine diphosphate is bound by residues glycine 151 to serine 152, asparagine 179, tyrosine 288, and glutamate 370. Asparagine 179 serves as a coordination point for Mg(2+).

Belongs to the transketolase family. DXPS subfamily. In terms of assembly, homodimer. Requires Mg(2+) as cofactor. Thiamine diphosphate serves as cofactor.

It catalyses the reaction D-glyceraldehyde 3-phosphate + pyruvate + H(+) = 1-deoxy-D-xylulose 5-phosphate + CO2. The protein operates within metabolic intermediate biosynthesis; 1-deoxy-D-xylulose 5-phosphate biosynthesis; 1-deoxy-D-xylulose 5-phosphate from D-glyceraldehyde 3-phosphate and pyruvate: step 1/1. Its function is as follows. Catalyzes the acyloin condensation reaction between C atoms 2 and 3 of pyruvate and glyceraldehyde 3-phosphate to yield 1-deoxy-D-xylulose-5-phosphate (DXP). In Brucella suis (strain ATCC 23445 / NCTC 10510), this protein is 1-deoxy-D-xylulose-5-phosphate synthase.